The following is a 439-amino-acid chain: Adenylosuccinate synthetase (439 aa).

GTP-binding positions include 14 to 20 (GDEGKGK) and 42 to 44 (GHT). Residue aspartate 15 is the Proton acceptor of the active site. Positions 15 and 42 each coordinate Mg(2+). IMP contacts are provided by residues 15–18 (DEGK), 40–43 (NAGH), threonine 130, arginine 144, glutamine 225, threonine 240, and arginine 304. Residue histidine 43 is the Proton donor of the active site. 300-306 (TTTGRRR) contributes to the substrate binding site. Residues arginine 306, 332-334 (KLD), and 414-416 (SLG) contribute to the GTP site.

It belongs to the adenylosuccinate synthetase family. Homodimer. It depends on Mg(2+) as a cofactor.

It is found in the cytoplasm. The enzyme catalyses IMP + L-aspartate + GTP = N(6)-(1,2-dicarboxyethyl)-AMP + GDP + phosphate + 2 H(+). It functions in the pathway purine metabolism; AMP biosynthesis via de novo pathway; AMP from IMP: step 1/2. Plays an important role in the de novo pathway of purine nucleotide biosynthesis. Catalyzes the first committed step in the biosynthesis of AMP from IMP. This Synechococcus sp. (strain CC9902) protein is Adenylosuccinate synthetase.